A 217-amino-acid chain; its full sequence is Adenylate kinase (217 aa).

An ATP-binding site is contributed by 10–15 (GAGKGT). The segment at 30-59 (STGDILRAAVSEMTPMGVKAKGYMESGALV) is NMP. Residues Thr31, Arg36, 57 to 59 (ALV), 85 to 88 (GFPR), and Gln92 each bind AMP. The segment at 126-163 (GRRTCRLCGKGYHVVFDPPRVSGRCDECLGELFQRDDD) is LID. Arg127 serves as a coordination point for ATP. 4 residues coordinate Zn(2+): Cys130, Cys133, Cys150, and Cys153. AMP contacts are provided by Arg160 and Arg171. Gly199 contributes to the ATP binding site.

This sequence belongs to the adenylate kinase family. As to quaternary structure, monomer.

Its subcellular location is the cytoplasm. It catalyses the reaction AMP + ATP = 2 ADP. It participates in purine metabolism; AMP biosynthesis via salvage pathway; AMP from ADP: step 1/1. Catalyzes the reversible transfer of the terminal phosphate group between ATP and AMP. Plays an important role in cellular energy homeostasis and in adenine nucleotide metabolism. This is Adenylate kinase from Geotalea uraniireducens (strain Rf4) (Geobacter uraniireducens).